The following is a 346-amino-acid chain: Phosphoribosylformylglycinamidine cyclo-ligase (346 aa).

It belongs to the AIR synthase family.

It is found in the cytoplasm. The catalysed reaction is 2-formamido-N(1)-(5-O-phospho-beta-D-ribosyl)acetamidine + ATP = 5-amino-1-(5-phospho-beta-D-ribosyl)imidazole + ADP + phosphate + H(+). Its pathway is purine metabolism; IMP biosynthesis via de novo pathway; 5-amino-1-(5-phospho-D-ribosyl)imidazole from N(2)-formyl-N(1)-(5-phospho-D-ribosyl)glycinamide: step 2/2. The chain is Phosphoribosylformylglycinamidine cyclo-ligase from Methylobacillus flagellatus (strain ATCC 51484 / DSM 6875 / VKM B-1610 / KT).